A 427-amino-acid polypeptide reads, in one-letter code: 3-phosphoshikimate 1-carboxyvinyltransferase (427 aa).

3 residues coordinate 3-phosphoshikimate: K20, S21, and R25. Position 20 (K20) interacts with phosphoenolpyruvate. G92 and R120 together coordinate phosphoenolpyruvate. The 3-phosphoshikimate site is built by S166, Q168, D312, and K339. Q168 contacts phosphoenolpyruvate. The active-site Proton acceptor is D312. Phosphoenolpyruvate-binding residues include R343 and R385.

This sequence belongs to the EPSP synthase family. As to quaternary structure, monomer.

Its subcellular location is the cytoplasm. The catalysed reaction is 3-phosphoshikimate + phosphoenolpyruvate = 5-O-(1-carboxyvinyl)-3-phosphoshikimate + phosphate. Its pathway is metabolic intermediate biosynthesis; chorismate biosynthesis; chorismate from D-erythrose 4-phosphate and phosphoenolpyruvate: step 6/7. In terms of biological role, catalyzes the transfer of the enolpyruvyl moiety of phosphoenolpyruvate (PEP) to the 5-hydroxyl of shikimate-3-phosphate (S3P) to produce enolpyruvyl shikimate-3-phosphate and inorganic phosphate. The sequence is that of 3-phosphoshikimate 1-carboxyvinyltransferase from Streptococcus pyogenes serotype M4 (strain MGAS10750).